Reading from the N-terminus, the 511-residue chain is Bifunctional purine biosynthesis protein PurH (511 aa).

One can recognise an MGS-like domain in the interval 1-145; that stretch reads MKKRALVSVS…KNHKFVSVIV (145 aa).

Belongs to the PurH family.

The enzyme catalyses (6R)-10-formyltetrahydrofolate + 5-amino-1-(5-phospho-beta-D-ribosyl)imidazole-4-carboxamide = 5-formamido-1-(5-phospho-D-ribosyl)imidazole-4-carboxamide + (6S)-5,6,7,8-tetrahydrofolate. It carries out the reaction IMP + H2O = 5-formamido-1-(5-phospho-D-ribosyl)imidazole-4-carboxamide. It participates in purine metabolism; IMP biosynthesis via de novo pathway; 5-formamido-1-(5-phospho-D-ribosyl)imidazole-4-carboxamide from 5-amino-1-(5-phospho-D-ribosyl)imidazole-4-carboxamide (10-formyl THF route): step 1/1. Its pathway is purine metabolism; IMP biosynthesis via de novo pathway; IMP from 5-formamido-1-(5-phospho-D-ribosyl)imidazole-4-carboxamide: step 1/1. This Bacillus anthracis (strain A0248) protein is Bifunctional purine biosynthesis protein PurH.